A 573-amino-acid polypeptide reads, in one-letter code: Potassium-transporting ATPase potassium-binding subunit (573 aa).

Transmembrane regions (helical) follow at residues 3 to 23, 65 to 85, 136 to 156, 179 to 199, 254 to 274, 286 to 306, 383 to 403, 423 to 443, 489 to 509, and 531 to 551; these read AEGLLQILLYLGLLAAVTPLL, GYTLALLSFNLLGLLLLYALL, GLTVQNFVSAATGIAVAVALI, LYVLLPLAFLGALVLVWQGVP, LTNLLESFYLLMIAAALIYSF, ALWTAVFILFVAGLAVTWWAE, AGLYGLLVFVILAVFIAGLMV, VIAVLVFPLGILGGAALTTVV, GLGLAMLLGRFAVIVPTLAIA, and LFITLLIATILIVGGLTFFPA.

Belongs to the KdpA family. The system is composed of three essential subunits: KdpA, KdpB and KdpC.

The protein resides in the cell inner membrane. In terms of biological role, part of the high-affinity ATP-driven potassium transport (or Kdp) system, which catalyzes the hydrolysis of ATP coupled with the electrogenic transport of potassium into the cytoplasm. This subunit binds the periplasmic potassium ions and delivers the ions to the membrane domain of KdpB through an intramembrane tunnel. This is Potassium-transporting ATPase potassium-binding subunit from Rhodospirillum centenum (strain ATCC 51521 / SW).